Consider the following 100-residue polypeptide: Phosphoribosylformylglycinamidine synthase subunit PurS (100 aa).

Belongs to the PurS family. Homodimer. Part of the FGAM synthase complex composed of 1 PurL, 1 PurQ and 2 PurS subunits.

The protein resides in the cytoplasm. It catalyses the reaction N(2)-formyl-N(1)-(5-phospho-beta-D-ribosyl)glycinamide + L-glutamine + ATP + H2O = 2-formamido-N(1)-(5-O-phospho-beta-D-ribosyl)acetamidine + L-glutamate + ADP + phosphate + H(+). The protein operates within purine metabolism; IMP biosynthesis via de novo pathway; 5-amino-1-(5-phospho-D-ribosyl)imidazole from N(2)-formyl-N(1)-(5-phospho-D-ribosyl)glycinamide: step 1/2. In terms of biological role, part of the phosphoribosylformylglycinamidine synthase complex involved in the purines biosynthetic pathway. Catalyzes the ATP-dependent conversion of formylglycinamide ribonucleotide (FGAR) and glutamine to yield formylglycinamidine ribonucleotide (FGAM) and glutamate. The FGAM synthase complex is composed of three subunits. PurQ produces an ammonia molecule by converting glutamine to glutamate. PurL transfers the ammonia molecule to FGAR to form FGAM in an ATP-dependent manner. PurS interacts with PurQ and PurL and is thought to assist in the transfer of the ammonia molecule from PurQ to PurL. This Synechocystis sp. (strain ATCC 27184 / PCC 6803 / Kazusa) protein is Phosphoribosylformylglycinamidine synthase subunit PurS.